Here is a 485-residue protein sequence, read N- to C-terminus: Probable glycine dehydrogenase (decarboxylating) subunit 2 (485 aa).

Lys-273 bears the N6-(pyridoxal phosphate)lysine mark.

This sequence belongs to the GcvP family. C-terminal subunit subfamily. As to quaternary structure, the glycine cleavage system is composed of four proteins: P, T, L and H. In this organism, the P 'protein' is a heterodimer of two subunits. It depends on pyridoxal 5'-phosphate as a cofactor.

The catalysed reaction is N(6)-[(R)-lipoyl]-L-lysyl-[glycine-cleavage complex H protein] + glycine + H(+) = N(6)-[(R)-S(8)-aminomethyldihydrolipoyl]-L-lysyl-[glycine-cleavage complex H protein] + CO2. Functionally, the glycine cleavage system catalyzes the degradation of glycine. The P protein binds the alpha-amino group of glycine through its pyridoxal phosphate cofactor; CO(2) is released and the remaining methylamine moiety is then transferred to the lipoamide cofactor of the H protein. The polypeptide is Probable glycine dehydrogenase (decarboxylating) subunit 2 (Bacillus licheniformis (strain ATCC 14580 / DSM 13 / JCM 2505 / CCUG 7422 / NBRC 12200 / NCIMB 9375 / NCTC 10341 / NRRL NRS-1264 / Gibson 46)).